A 342-amino-acid chain; its full sequence is Phosphate acyltransferase (342 aa).

It belongs to the PlsX family. In terms of assembly, homodimer. Probably interacts with PlsY.

It localises to the cytoplasm. It carries out the reaction a fatty acyl-[ACP] + phosphate = an acyl phosphate + holo-[ACP]. The protein operates within lipid metabolism; phospholipid metabolism. Its function is as follows. Catalyzes the reversible formation of acyl-phosphate (acyl-PO(4)) from acyl-[acyl-carrier-protein] (acyl-ACP). This enzyme utilizes acyl-ACP as fatty acyl donor, but not acyl-CoA. The chain is Phosphate acyltransferase from Shewanella sp. (strain MR-4).